The chain runs to 406 residues: NADH-quinone oxidoreductase subunit D (406 aa).

It belongs to the complex I 49 kDa subunit family. NDH-1 is composed of 14 different subunits. Subunits NuoB, C, D, E, F, and G constitute the peripheral sector of the complex.

The protein localises to the cell inner membrane. The enzyme catalyses a quinone + NADH + 5 H(+)(in) = a quinol + NAD(+) + 4 H(+)(out). Its function is as follows. NDH-1 shuttles electrons from NADH, via FMN and iron-sulfur (Fe-S) centers, to quinones in the respiratory chain. The immediate electron acceptor for the enzyme in this species is believed to be ubiquinone. Couples the redox reaction to proton translocation (for every two electrons transferred, four hydrogen ions are translocated across the cytoplasmic membrane), and thus conserves the redox energy in a proton gradient. The sequence is that of NADH-quinone oxidoreductase subunit D from Rhizorhabdus wittichii (strain DSM 6014 / CCUG 31198 / JCM 15750 / NBRC 105917 / EY 4224 / RW1) (Sphingomonas wittichii).